The following is a 921-amino-acid chain: DNA ligase (921 aa).

Residues 90-94, 139-140, and E173 contribute to the NAD(+) site; these read DAAYD and SL. The active-site N6-AMP-lysine intermediate is K175. NAD(+)-binding residues include R196, E235, K360, and K384. Residues C481, C484, C500, and C506 each coordinate Zn(2+). The interval 663–688 is disordered; the sequence is EAAIESAETQGGAASETTGAPTGAEA. Residues 839-921 form the BRCT domain; sequence SLPQTLAGKT…AQLLETGSID (83 aa).

The protein belongs to the NAD-dependent DNA ligase family. LigA subfamily. Mg(2+) is required as a cofactor. It depends on Mn(2+) as a cofactor.

It catalyses the reaction NAD(+) + (deoxyribonucleotide)n-3'-hydroxyl + 5'-phospho-(deoxyribonucleotide)m = (deoxyribonucleotide)n+m + AMP + beta-nicotinamide D-nucleotide.. DNA ligase that catalyzes the formation of phosphodiester linkages between 5'-phosphoryl and 3'-hydroxyl groups in double-stranded DNA using NAD as a coenzyme and as the energy source for the reaction. It is essential for DNA replication and repair of damaged DNA. This chain is DNA ligase, found in Bifidobacterium longum subsp. infantis (strain ATCC 15697 / DSM 20088 / JCM 1222 / NCTC 11817 / S12).